We begin with the raw amino-acid sequence, 525 residues long: Bifunctional purine biosynthesis protein PurH (525 aa).

The MGS-like domain occupies 1–148 (MPSNNLIKNA…KNYKNVIVIV (148 aa)).

This sequence belongs to the PurH family.

The enzyme catalyses (6R)-10-formyltetrahydrofolate + 5-amino-1-(5-phospho-beta-D-ribosyl)imidazole-4-carboxamide = 5-formamido-1-(5-phospho-D-ribosyl)imidazole-4-carboxamide + (6S)-5,6,7,8-tetrahydrofolate. The catalysed reaction is IMP + H2O = 5-formamido-1-(5-phospho-D-ribosyl)imidazole-4-carboxamide. The protein operates within purine metabolism; IMP biosynthesis via de novo pathway; 5-formamido-1-(5-phospho-D-ribosyl)imidazole-4-carboxamide from 5-amino-1-(5-phospho-D-ribosyl)imidazole-4-carboxamide (10-formyl THF route): step 1/1. It functions in the pathway purine metabolism; IMP biosynthesis via de novo pathway; IMP from 5-formamido-1-(5-phospho-D-ribosyl)imidazole-4-carboxamide: step 1/1. The chain is Bifunctional purine biosynthesis protein PurH from Buchnera aphidicola subsp. Acyrthosiphon pisum (strain APS) (Acyrthosiphon pisum symbiotic bacterium).